Here is a 451-residue protein sequence, read N- to C-terminus: MRECISIHVGQAGVQIGNACWELYCLEHGIQPDGQMPSDKTIGGGDDSFNTFFSETGAGKHVPRAVFVDLEPTVIDEVRTGTYRQLFHPEQLITGKEDAANNYARGHYTIGKEIIDLVLDRIRKLADQCTGLQGFLVFHSFGGGTGSGFTSLLMERLSVDYGKKSKLEFSIYPAPQVSTAVVEPYNSILTTHTTLEHSDCAFMVDNEAIYDICRRNLDIERPTYTNLNRLISQIVSSITASLRFDGALNVDLTEFQTNLVPYPRIHFPLATYAPVISAEKAYHEQLSVSEITNACFEPANQMVKCDPRHGKYMACCLLYRGDVVPKDVNAAIATIKTKRSIQFVDWCPTGFKVGINYQPPTVVPGGDLAKVQRAVCMLSNTTAIAEAWARLDHKFDLMYAKRAFVHWYVGEGMEEGEFSEAREDMAALEKDYEEVGVDSVEGEGEEEGEEY.

The MREC motif motif lies at 1–4 (MREC). Gln11 is a binding site for GTP. Lys40 carries the N6-acetyllysine modification. GTP-binding residues include Glu71, Ser140, Gly144, Thr145, Thr179, Asn206, and Asn228. Residue Glu71 coordinates Mg(2+). Glu254 is a catalytic residue. Residues 432-451 (YEEVGVDSVEGEGEEEGEEY) form a disordered region. The residue at position 445 (Glu445) is a 5-glutamyl polyglutamate.

It belongs to the tubulin family. As to quaternary structure, dimer of alpha and beta chains. A typical microtubule is a hollow water-filled tube with an outer diameter of 25 nm and an inner diameter of 15 nM. Alpha-beta heterodimers associate head-to-tail to form protofilaments running lengthwise along the microtubule wall with the beta-tubulin subunit facing the microtubule plus end conferring a structural polarity. Microtubules usually have 13 protofilaments but different protofilament numbers can be found in some organisms and specialized cells. The cofactor is Mg(2+). Post-translationally, some glutamate residues at the C-terminus are polyglycylated, resulting in polyglycine chains on the gamma-carboxyl group. Glycylation is mainly limited to tubulin incorporated into axonemes (cilia and flagella) whereas glutamylation is prevalent in neuronal cells, centrioles, axonemes, and the mitotic spindle. Both modifications can coexist on the same protein on adjacent residues, and lowering polyglycylation levels increases polyglutamylation, and reciprocally. The precise function of polyglycylation is still unclear. In terms of processing, some glutamate residues at the C-terminus are polyglutamylated, resulting in polyglutamate chains on the gamma-carboxyl group. Polyglutamylation plays a key role in microtubule severing by spastin (SPAST). SPAST preferentially recognizes and acts on microtubules decorated with short polyglutamate tails: severing activity by SPAST increases as the number of glutamates per tubulin rises from one to eight, but decreases beyond this glutamylation threshold. Acetylation of alpha chains at Lys-40 is located inside the microtubule lumen. This modification has been correlated with increased microtubule stability, intracellular transport and ciliary assembly. Post-translationally, undergoes a tyrosination/detyrosination cycle, the cyclic removal and re-addition of a C-terminal tyrosine residue by the enzymes tubulin tyrosine carboxypeptidase (MATCAP, VASH1 or VASH2) and tubulin tyrosine ligase (TTL), respectively. In terms of processing, tyrosination promotes microtubule interaction with CAP-Gly microtubule plus-end tracking proteins. Tyrosinated tubulins regulate the initiation of dynein-driven motility. Detyrosination is involved in metaphase plate congression by guiding chromosomes during mitosis. Detyrosination increases microtubules-dependent mechanotransduction in dystrophic cardiac and skeletal muscle. In cardiomyocytes, detyrosinated microtubules are required to resist to contractile compression during contraction.

It is found in the cytoplasm. It localises to the cytoskeleton. The catalysed reaction is GTP + H2O = GDP + phosphate + H(+). Functionally, tubulin is the major constituent of microtubules, a cylinder consisting of laterally associated linear protofilaments composed of alpha- and beta-tubulin heterodimers. Microtubules grow by the addition of GTP-tubulin dimers to the microtubule end, where a stabilizing cap forms. Below the cap, tubulin dimers are in GDP-bound state, owing to GTPase activity of alpha-tubulin. The polypeptide is Tubulin alpha chain (Torpedo marmorata (Marbled electric ray)).